The following is a 337-amino-acid chain: Phenylalanine--tRNA ligase alpha subunit (337 aa).

E252 lines the Mg(2+) pocket.

It belongs to the class-II aminoacyl-tRNA synthetase family. Phe-tRNA synthetase alpha subunit type 1 subfamily. Tetramer of two alpha and two beta subunits. It depends on Mg(2+) as a cofactor.

Its subcellular location is the cytoplasm. The catalysed reaction is tRNA(Phe) + L-phenylalanine + ATP = L-phenylalanyl-tRNA(Phe) + AMP + diphosphate + H(+). This is Phenylalanine--tRNA ligase alpha subunit from Francisella tularensis subsp. holarctica (strain OSU18).